The following is a 283-amino-acid chain: Phosphatidylserine decarboxylase proenzyme (283 aa).

Active-site charge relay system; for autoendoproteolytic cleavage activity residues include aspartate 96, histidine 152, and serine 250. The active-site Schiff-base intermediate with substrate; via pyruvic acid; for decarboxylase activity is the serine 250. Residue serine 250 is modified to Pyruvic acid (Ser); by autocatalysis.

The protein belongs to the phosphatidylserine decarboxylase family. PSD-B subfamily. Prokaryotic type I sub-subfamily. In terms of assembly, heterodimer of a large membrane-associated beta subunit and a small pyruvoyl-containing alpha subunit. Pyruvate serves as cofactor. In terms of processing, is synthesized initially as an inactive proenzyme. Formation of the active enzyme involves a self-maturation process in which the active site pyruvoyl group is generated from an internal serine residue via an autocatalytic post-translational modification. Two non-identical subunits are generated from the proenzyme in this reaction, and the pyruvate is formed at the N-terminus of the alpha chain, which is derived from the carboxyl end of the proenzyme. The autoendoproteolytic cleavage occurs by a canonical serine protease mechanism, in which the side chain hydroxyl group of the serine supplies its oxygen atom to form the C-terminus of the beta chain, while the remainder of the serine residue undergoes an oxidative deamination to produce ammonia and the pyruvoyl prosthetic group on the alpha chain. During this reaction, the Ser that is part of the protease active site of the proenzyme becomes the pyruvoyl prosthetic group, which constitutes an essential element of the active site of the mature decarboxylase.

The protein resides in the cell membrane. It catalyses the reaction a 1,2-diacyl-sn-glycero-3-phospho-L-serine + H(+) = a 1,2-diacyl-sn-glycero-3-phosphoethanolamine + CO2. It functions in the pathway phospholipid metabolism; phosphatidylethanolamine biosynthesis; phosphatidylethanolamine from CDP-diacylglycerol: step 2/2. In terms of biological role, catalyzes the formation of phosphatidylethanolamine (PtdEtn) from phosphatidylserine (PtdSer). In Acinetobacter baumannii (strain ACICU), this protein is Phosphatidylserine decarboxylase proenzyme.